We begin with the raw amino-acid sequence, 389 residues long: S-adenosylmethionine synthase (389 aa).

Histidine 15 provides a ligand contact to ATP. Aspartate 17 provides a ligand contact to Mg(2+). K(+) is bound at residue glutamate 43. L-methionine-binding residues include glutamate 56 and glutamine 99. The interval 99 to 109 (QSPDIAQGVNE) is flexible loop. ATP-binding positions include 166-168 (DAK), 234-235 (RF), aspartate 243, 249-250 (RK), alanine 266, and lysine 270. Aspartate 243 contributes to the L-methionine binding site. Lysine 274 provides a ligand contact to L-methionine.

It belongs to the AdoMet synthase family. In terms of assembly, homotetramer; dimer of dimers. Requires Mg(2+) as cofactor. It depends on K(+) as a cofactor.

The protein localises to the cytoplasm. The catalysed reaction is L-methionine + ATP + H2O = S-adenosyl-L-methionine + phosphate + diphosphate. It functions in the pathway amino-acid biosynthesis; S-adenosyl-L-methionine biosynthesis; S-adenosyl-L-methionine from L-methionine: step 1/1. Its function is as follows. Catalyzes the formation of S-adenosylmethionine (AdoMet) from methionine and ATP. The overall synthetic reaction is composed of two sequential steps, AdoMet formation and the subsequent tripolyphosphate hydrolysis which occurs prior to release of AdoMet from the enzyme. In Laribacter hongkongensis (strain HLHK9), this protein is S-adenosylmethionine synthase.